Here is a 75-residue protein sequence, read N- to C-terminus: MKLLLFTALVLVVISLVEVEAENERACIPLEKECTKTPGNCCSGLRCDCYRRFEQGVAKGTQCWCIEKDVTYKGV.

The signal sequence occupies residues 1–21 (MKLLLFTALVLVVISLVEVEA). Residues 22–25 (ENER) constitute a propeptide that is removed on maturation.

It belongs to the neurotoxin 19 (CSTX) family. 06 (U6-Lctx) subfamily. In terms of processing, contains 4 disulfide bonds. As to expression, expressed by the venom gland.

Its subcellular location is the secreted. The polypeptide is U6-lycotoxin-Ls1f (Lycosa singoriensis (Wolf spider)).